Consider the following 252-residue polypeptide: Mediator of RNA polymerase II transcription subunit 4 (252 aa).

Coiled-coil stretches lie at residues 5–31 (KKSTKERLESLLDDLEVLSREVIETLA) and 70–112 (KTHQ…QAKE). Residues 213–252 (MLPPNHSNEFLMESLGPNKENEEDVEVMSTDSSSSSSDSD) form a disordered region. A compositionally biased stretch (low complexity) spans 241–252 (STDSSSSSSDSD).

It belongs to the Mediator complex subunit 4 family. In terms of assembly, component of the Mediator complex.

It is found in the nucleus. Functionally, component of the Mediator complex, a coactivator involved in the regulated transcription of nearly all RNA polymerase II-dependent genes. Mediator functions as a bridge to convey information from gene-specific regulatory proteins to the basal RNA polymerase II transcription machinery. Mediator is recruited to promoters by direct interactions with regulatory proteins and serves as a scaffold for the assembly of a functional preinitiation complex with RNA polymerase II and the general transcription factors. This Xenopus laevis (African clawed frog) protein is Mediator of RNA polymerase II transcription subunit 4 (med4).